Consider the following 361-residue polypeptide: Phospho-N-acetylmuramoyl-pentapeptide-transferase (361 aa).

10 consecutive transmembrane segments (helical) span residues 27–47 (GALF…ISLL), 72–92 (TPTM…FLWA), 99–119 (VWIT…DDYL), 139–159 (ALIA…GLAY), 169–189 (AIVN…VGAG), 200–220 (GLAI…AYLV), 240–260 (LAVV…FNAP), 264–284 (IFMG…VAVA), 289–309 (IVLA…IIQV), and 338–358 (QVVI…LATL).

The protein belongs to the glycosyltransferase 4 family. MraY subfamily. Requires Mg(2+) as cofactor.

The protein resides in the cell inner membrane. It catalyses the reaction UDP-N-acetyl-alpha-D-muramoyl-L-alanyl-gamma-D-glutamyl-meso-2,6-diaminopimeloyl-D-alanyl-D-alanine + di-trans,octa-cis-undecaprenyl phosphate = di-trans,octa-cis-undecaprenyl diphospho-N-acetyl-alpha-D-muramoyl-L-alanyl-D-glutamyl-meso-2,6-diaminopimeloyl-D-alanyl-D-alanine + UMP. It functions in the pathway cell wall biogenesis; peptidoglycan biosynthesis. Its function is as follows. Catalyzes the initial step of the lipid cycle reactions in the biosynthesis of the cell wall peptidoglycan: transfers peptidoglycan precursor phospho-MurNAc-pentapeptide from UDP-MurNAc-pentapeptide onto the lipid carrier undecaprenyl phosphate, yielding undecaprenyl-pyrophosphoryl-MurNAc-pentapeptide, known as lipid I. This is Phospho-N-acetylmuramoyl-pentapeptide-transferase from Methylobacterium sp. (strain 4-46).